We begin with the raw amino-acid sequence, 564 residues long: Dihydroxy-acid dehydratase (564 aa).

Asp-80 contributes to the Mg(2+) binding site. Cys-121 lines the [2Fe-2S] cluster pocket. 2 residues coordinate Mg(2+): Asp-122 and Lys-123. An N6-carboxylysine modification is found at Lys-123. Cys-194 provides a ligand contact to [2Fe-2S] cluster. Glu-447 provides a ligand contact to Mg(2+). Ser-473 (proton acceptor) is an active-site residue.

The protein belongs to the IlvD/Edd family. Homodimer. [2Fe-2S] cluster is required as a cofactor. Mg(2+) serves as cofactor.

The catalysed reaction is (2R)-2,3-dihydroxy-3-methylbutanoate = 3-methyl-2-oxobutanoate + H2O. It catalyses the reaction (2R,3R)-2,3-dihydroxy-3-methylpentanoate = (S)-3-methyl-2-oxopentanoate + H2O. The protein operates within amino-acid biosynthesis; L-isoleucine biosynthesis; L-isoleucine from 2-oxobutanoate: step 3/4. It functions in the pathway amino-acid biosynthesis; L-valine biosynthesis; L-valine from pyruvate: step 3/4. In terms of biological role, functions in the biosynthesis of branched-chain amino acids. Catalyzes the dehydration of (2R,3R)-2,3-dihydroxy-3-methylpentanoate (2,3-dihydroxy-3-methylvalerate) into 2-oxo-3-methylpentanoate (2-oxo-3-methylvalerate) and of (2R)-2,3-dihydroxy-3-methylbutanoate (2,3-dihydroxyisovalerate) into 2-oxo-3-methylbutanoate (2-oxoisovalerate), the penultimate precursor to L-isoleucine and L-valine, respectively. The sequence is that of Dihydroxy-acid dehydratase from Listeria innocua serovar 6a (strain ATCC BAA-680 / CLIP 11262).